Consider the following 218-residue polypeptide: Small ribosomal subunit protein uS3 (218 aa).

The 69-residue stretch at 38 to 106 (IRDYVAKRLS…RVHINIVEIK (69 aa)) folds into the KH type-2 domain.

It belongs to the universal ribosomal protein uS3 family. Part of the 30S ribosomal subunit. Forms a tight complex with proteins S10 and S14.

Its function is as follows. Binds the lower part of the 30S subunit head. Binds mRNA in the 70S ribosome, positioning it for translation. The chain is Small ribosomal subunit protein uS3 from Listeria monocytogenes serotype 4b (strain F2365).